Reading from the N-terminus, the 338-residue chain is Phosphoribosylformylglycinamidine cyclo-ligase (338 aa).

Belongs to the AIR synthase family.

Its subcellular location is the cytoplasm. The enzyme catalyses 2-formamido-N(1)-(5-O-phospho-beta-D-ribosyl)acetamidine + ATP = 5-amino-1-(5-phospho-beta-D-ribosyl)imidazole + ADP + phosphate + H(+). It participates in purine metabolism; IMP biosynthesis via de novo pathway; 5-amino-1-(5-phospho-D-ribosyl)imidazole from N(2)-formyl-N(1)-(5-phospho-D-ribosyl)glycinamide: step 2/2. This Lactococcus lactis subsp. lactis (strain IL1403) (Streptococcus lactis) protein is Phosphoribosylformylglycinamidine cyclo-ligase.